The primary structure comprises 772 residues: 5-methyltetrahydropteroyltriglutamate--homocysteine methyltransferase (772 aa).

5-methyltetrahydropteroyltri-L-glutamate is bound by residues 24–27 (RELK) and K120. L-homocysteine contacts are provided by residues 446 to 448 (IGS) and E499. Residues 446–448 (IGS) and E499 each bind L-methionine. 5-methyltetrahydropteroyltri-L-glutamate is bound at residue W576. D614 is an L-homocysteine binding site. Residue D614 coordinates L-methionine. A 5-methyltetrahydropteroyltri-L-glutamate-binding site is contributed by E620. Residues H656, C658, and E680 each contribute to the Zn(2+) site. H709 acts as the Proton donor in catalysis. C741 contributes to the Zn(2+) binding site.

The protein belongs to the vitamin-B12 independent methionine synthase family. It depends on Zn(2+) as a cofactor.

It catalyses the reaction 5-methyltetrahydropteroyltri-L-glutamate + L-homocysteine = tetrahydropteroyltri-L-glutamate + L-methionine. It functions in the pathway amino-acid biosynthesis; L-methionine biosynthesis via de novo pathway; L-methionine from L-homocysteine (MetE route): step 1/1. In terms of biological role, catalyzes the transfer of a methyl group from 5-methyltetrahydrofolate to homocysteine resulting in methionine formation. The sequence is that of 5-methyltetrahydropteroyltriglutamate--homocysteine methyltransferase from Streptomyces coelicolor (strain ATCC BAA-471 / A3(2) / M145).